The primary structure comprises 240 residues: MELMAKPTFSIEVSQYGTTDLPATEKASSSSSSFETTNEEGVEESGLSRIWSGQTADYSSDSSSIGTPGDSEEDEEESENENDDVSSKELGLRGLASMSSLEDSLPSKRGLSNHYKGKSKSFGNLGEIGSVKEVAKQENPLNKRRRLQICNKLARKSFYSWQNPKSMPLLPVNEDEDDDDEDDDEEDLKSGFDENKSSSDEEGVKKVVVRKGSFKNRAYKSRSCFALSDLIEEEDDDDDQ.

The interval 1 to 128 is disordered; the sequence is MELMAKPTFS…SKSFGNLGEI (128 aa). Residues 51–66 are compositionally biased toward polar residues; sequence WSGQTADYSSDSSSIG. The segment covering 70-84 has biased composition (acidic residues); it reads DSEEDEEESENENDD. Positions 142–150 match the Nuclear localization signal motif; the sequence is NKRRRLQIC. Residues 163–207 are disordered; that stretch reads NPKSMPLLPVNEDEDDDDEDDDEEDLKSGFDENKSSSDEEGVKKV. The segment covering 173–187 has biased composition (acidic residues); that stretch reads NEDEDDDDEDDDEED. Over residues 188 to 205 the composition is skewed to basic and acidic residues; it reads LKSGFDENKSSSDEEGVK. The kinase-inducible domain (KID) stretch occupies residues 202 to 229; that stretch reads EGVKKVVVRKGSFKNRAYKSRSCFALSD. Ser213 bears the Phosphoserine mark.

As to quaternary structure, interacts with HDA19; Ser-213 is critical for this interaction.

The protein localises to the nucleus. Transcription activator which may regulates gene expression through interaction with the histone deacetylase HDA19. Promotes slightly the tolerance to cadmium (Cd) and to oxidizing chemicals (e.g. diamide and tert-butyl hydroperoxide (t-BOOH)). The protein is Protein OXIDATIVE STRESS 3 LIKE 4 of Arabidopsis thaliana (Mouse-ear cress).